Here is a 1149-residue protein sequence, read N- to C-terminus: ATP-dependent helicase/deoxyribonuclease subunit B (1149 aa).

A UvrD-like helicase ATP-binding domain is found at 1-276; it reads MAIRYIFGRA…INLDIEERKV (276 aa). Residue 8–15 coordinates ATP; it reads GRAGRGKS. Residues 273-586 enclose the UvrD-like helicase C-terminal domain; it reads ERKVLPKEKE…LVGSIERSKS (314 aa). [4Fe-4S] cluster is bound by residues Cys786, Cys1105, Cys1108, and Cys1114.

This sequence belongs to the helicase family. AddB/RexB type 1 subfamily. In terms of assembly, heterodimer of AddA and AddB. The cofactor is Mg(2+). [4Fe-4S] cluster is required as a cofactor.

The heterodimer acts as both an ATP-dependent DNA helicase and an ATP-dependent, dual-direction single-stranded exonuclease. Recognizes the chi site generating a DNA molecule suitable for the initiation of homologous recombination. The AddB subunit has 5' -&gt; 3' nuclease activity but not helicase activity. The chain is ATP-dependent helicase/deoxyribonuclease subunit B from Alkaliphilus metalliredigens (strain QYMF).